We begin with the raw amino-acid sequence, 101 residues long: Small ribosomal subunit protein bS18c (101 aa).

Over residues 1–19 the composition is skewed to basic residues; the sequence is MDKSKRPFRKSKRSFRKRL. Residues 1 to 23 are disordered; sequence MDKSKRPFRKSKRSFRKRLPPIG.

It belongs to the bacterial ribosomal protein bS18 family. Part of the 30S ribosomal subunit.

Its subcellular location is the plastid. It localises to the chloroplast. The protein is Small ribosomal subunit protein bS18c of Chloranthus spicatus (Chulantree).